Here is a 187-residue protein sequence, read N- to C-terminus: Elongation factor P (187 aa).

This sequence belongs to the elongation factor P family.

The protein resides in the cytoplasm. The protein operates within protein biosynthesis; polypeptide chain elongation. In terms of biological role, involved in peptide bond synthesis. Stimulates efficient translation and peptide-bond synthesis on native or reconstituted 70S ribosomes in vitro. Probably functions indirectly by altering the affinity of the ribosome for aminoacyl-tRNA, thus increasing their reactivity as acceptors for peptidyl transferase. This chain is Elongation factor P, found in Parvibaculum lavamentivorans (strain DS-1 / DSM 13023 / NCIMB 13966).